Reading from the N-terminus, the 381-residue chain is MRVAIGQAGGPTSVINESLASFVSTFSDDDIYLVLNGYEGLATNQMKAMGEMQRETIERSRGEPGAVLGSGRYDFSPALQKQALAYLMERRIEALVFIGGNGTMSALHAVQHLAEEAGYPLKVIGIPKTVDNDIAGIDHAPGFGSAAKYVAQSARYSKMDLQAMRNFEQVRILETMGRNVGWLAQASGYGMTEEAGPDAIYVPEREYSLETILGDVRRAWKEKGYCLLVISEGVTINNQQTALSNSRGRTILGGVSKVIEEAVREKLELVSRAEQLGMNQRCYYPAVSKVDQQEAAAVGTYAAKLVQNGESGFMVGVHRHDTMNYKAELTRVPLQIVSDGGERLLPDTYIEERKAYNEWLEGIIDLPPVSTQTQAGSSSIL.

ATP contacts are provided by residues G10, R72 to Y73, and G100 to T103. Residue N101 participates in Mg(2+) binding. D131 serves as the catalytic Proton acceptor.

This sequence belongs to the phosphofructokinase type A (PFKA) family. It depends on Mg(2+) as a cofactor.

It catalyses the reaction 6-deoxy-6-sulfo-D-fructose + ATP = 6-deoxy-6-sulfo-D-fructose 1-phosphate + ADP + H(+). In terms of biological role, part of the sulfo-EMP2 pathway, a D-sulfoquinovose degradation pathway that produces sulfolactate (SL). Phosphorylates 6-deoxy-6-sulfo-D-fructose (SF) to 6-deoxy-6-sulfo-D-fructose 1-phosphate (SFP). The chain is Sulfofructose kinase from Alkalicoccus urumqiensis (Bacillus urumqiensis).